The chain runs to 201 residues: MSLNFAAMARQSERQASTVMVPKGEEQPESPKIHTLGSNELRKPAKRISKVNEQVRELAREMLRSMYAAHGIGLAAPQVGVHQQLLVIDLDPEEAANPPLVLINPEIVATSGALDTYEEGCLSIPGVYLNVVRPSQVDVKYRDELGRPQRRKADGLMARCILHEMDHLNGVLFVDRVSDELSLSGELQRLGFDRNDVKPVA.

The disordered stretch occupies residues 1-34 (MSLNFAAMARQSERQASTVMVPKGEEQPESPKIH). Residues 23–32 (KGEEQPESPK) are compositionally biased toward basic and acidic residues. Cys121 and His163 together coordinate Fe cation. Residue Glu164 is part of the active site. Residue His167 coordinates Fe cation.

It belongs to the polypeptide deformylase family. The cofactor is Fe(2+).

The catalysed reaction is N-terminal N-formyl-L-methionyl-[peptide] + H2O = N-terminal L-methionyl-[peptide] + formate. Functionally, removes the formyl group from the N-terminal Met of newly synthesized proteins. Requires at least a dipeptide for an efficient rate of reaction. N-terminal L-methionine is a prerequisite for activity but the enzyme has broad specificity at other positions. In Synechococcus sp. (strain RCC307), this protein is Peptide deformylase.